We begin with the raw amino-acid sequence, 909 residues long: E3 ubiquitin-protein ligase HACE1 (909 aa).

The N-terminal helix important for homodimerization stretch occupies residues 1-21 (MERAMEQLNRLTRSLRRARTV). ANK repeat units follow at residues 23 to 55 (LPDDNETAVYTLMPMVMADQHRSVSELLSNSKF), 64 to 93 (VKRSLLHIAANCGSVECLVLLLKKGANPNY), 97 to 126 (SGCTPLHLAARNGQKKCMSKLLEYSADVNI), 130 to 159 (EGLTAIHWLAVNGRTELLHDLVQHVSDVDV), 163 to 192 (MGQTALHVACQNGHKTTVQCLLDSGADINR), 196 to 226 (SGATPLYFACSHGQRDTAQILLLRGAKYLSD), and 228 to 253 (NGVTPLDLCVQGGYGETCEVLIQYHP). The tract at residues 396 to 433 (KGQDQDGTSIPPFEPPGPGSYENLSTGTGESKPDVLGG) is disordered. Residues 574-909 (NCAKLKQGIA…HCGSYGYTMA (336 aa)) enclose the HECT domain. Catalysis depends on cysteine 876, which acts as the Glycyl thioester intermediate.

Homodimer. The homodimer is autoinhibited and stabilized by its N-terminal helix. Interacts with RAB1 (RAB1A, RAB1B or RAB1C), RAB4 (RAB4A or RAB4B) and RAB11 (RAB11A or RAB11B); in a GTP-dependent manner. Interacts with the 26S proteasomal complex through the 20S core proteasomal subunit. Interacts with RARB. In terms of processing, autoubiquitinated.

The protein resides in the golgi apparatus. It is found in the golgi stack membrane. The protein localises to the cytoplasm. It localises to the endoplasmic reticulum. It carries out the reaction S-ubiquitinyl-[E2 ubiquitin-conjugating enzyme]-L-cysteine + [acceptor protein]-L-lysine = [E2 ubiquitin-conjugating enzyme]-L-cysteine + N(6)-ubiquitinyl-[acceptor protein]-L-lysine.. It functions in the pathway protein modification; protein ubiquitination. Functionally, E3 ubiquitin-protein ligase involved in Golgi membrane fusion and regulation of small GTPases. Acts as a regulator of Golgi membrane dynamics during the cell cycle: recruited to Golgi membrane by Rab proteins and regulates postmitotic Golgi membrane fusion. Acts by mediating ubiquitination during mitotic Golgi disassembly, ubiquitination serving as a signal for Golgi reassembly later, after cell division. Specifically binds GTP-bound RAC1, mediating ubiquitination and subsequent degradation of active RAC1, thereby playing a role in host defense against pathogens. May also act as a transcription regulator via its interaction with RARB. The polypeptide is E3 ubiquitin-protein ligase HACE1 (HACE1) (Bos taurus (Bovine)).